The following is a 632-amino-acid chain: tRNA-guanine(15) transglycosylase (632 aa).

The active-site Nucleophile is Asp86. Residues Asp121 and Gly186 each contribute to the substrate site. Residues 553 to 628 (NLRVFVKNES…IAVKIHEGRD (76 aa)) form the PUA domain.

This sequence belongs to the archaeosine tRNA-ribosyltransferase family. The cofactor is Zn(2+).

It catalyses the reaction guanosine(15) in tRNA + 7-cyano-7-deazaguanine = 7-cyano-7-carbaguanosine(15) in tRNA + guanine. It participates in tRNA modification; archaeosine-tRNA biosynthesis. Functionally, exchanges the guanine residue with 7-cyano-7-deazaguanine (preQ0) at position 15 in the dihydrouridine loop (D-loop) of archaeal tRNAs. The chain is tRNA-guanine(15) transglycosylase from Thermoplasma volcanium (strain ATCC 51530 / DSM 4299 / JCM 9571 / NBRC 15438 / GSS1).